Here is a 352-residue protein sequence, read N- to C-terminus: Phosphoribosylformylglycinamidine cyclo-ligase (352 aa).

Belongs to the AIR synthase family.

The protein resides in the cytoplasm. It catalyses the reaction 2-formamido-N(1)-(5-O-phospho-beta-D-ribosyl)acetamidine + ATP = 5-amino-1-(5-phospho-beta-D-ribosyl)imidazole + ADP + phosphate + H(+). The protein operates within purine metabolism; IMP biosynthesis via de novo pathway; 5-amino-1-(5-phospho-D-ribosyl)imidazole from N(2)-formyl-N(1)-(5-phospho-D-ribosyl)glycinamide: step 2/2. This is Phosphoribosylformylglycinamidine cyclo-ligase from Nitrosospira multiformis (strain ATCC 25196 / NCIMB 11849 / C 71).